The following is a 407-amino-acid chain: MKYPNLLERFLTYVKVNTRSDETSTTTPSTQSQVDFAKNVLIPEMKRVGLENVYYLPNGFAIGTLPANDPSFTRKIGFISHMDTADFNAENIQPQVIENYDGGVIPLGQSGFNLDPADFASLHKYKGQTLITTDGTTLLGADDKSGIAEIMTAIEYLSAHPEIKHGEIRVGFGPDEEIGIGADKFDAEDFDVDFAYTVDGGPLGELQYETFSAAGAELTFQGRNVHPGTAKDQMVNALQLAIDFHSQLPETDRPEKTEGYQGFYHLMNLSGTVEEAHASYIVRDFETEAFENRKAAMKVIAEKMNQELGSERVSLTLKDQYYNMKQVIEKDMTPIHIAKAVMENLDIQPIIEPIRGGTDGSKISFMGIPTPNLFAGGENMHGRFEYVSLETMERAVDTIIGIVSYQD.

H81 is a binding site for Zn(2+). D83 is an active-site residue. Zn(2+) is bound at residue D142. E176 acts as the Proton acceptor in catalysis. Zn(2+) is bound by residues E177, D199, and H381.

Belongs to the peptidase M20B family. Zn(2+) serves as cofactor.

It localises to the cytoplasm. It catalyses the reaction Release of the N-terminal residue from a tripeptide.. Its function is as follows. Cleaves the N-terminal amino acid of tripeptides. This Streptococcus sanguinis (strain SK36) protein is Peptidase T.